The sequence spans 123 residues: Large ribosomal subunit protein bL20 (123 aa).

The protein belongs to the bacterial ribosomal protein bL20 family.

In terms of biological role, binds directly to 23S ribosomal RNA and is necessary for the in vitro assembly process of the 50S ribosomal subunit. It is not involved in the protein synthesizing functions of that subunit. The sequence is that of Large ribosomal subunit protein bL20 (rplT) from Chlamydia trachomatis serovar D (strain ATCC VR-885 / DSM 19411 / UW-3/Cx).